Consider the following 285-residue polypeptide: Protease HtpX homolog (285 aa).

Transmembrane regions (helical) follow at residues 7–27 (TAML…MIGG) and 30–50 (GMTI…WFSD). H131 lines the Zn(2+) pocket. E132 is a catalytic residue. H135 serves as a coordination point for Zn(2+). 2 consecutive transmembrane segments (helical) span residues 146-166 (ITAT…FFGG) and 177-197 (IAGI…QMAI). A Zn(2+)-binding site is contributed by E202.

It belongs to the peptidase M48B family. The cofactor is Zn(2+).

Its subcellular location is the cell inner membrane. The polypeptide is Protease HtpX homolog (Burkholderia cenocepacia (strain ATCC BAA-245 / DSM 16553 / LMG 16656 / NCTC 13227 / J2315 / CF5610) (Burkholderia cepacia (strain J2315))).